Reading from the N-terminus, the 204-residue chain is Transcriptional regulator GfcR (204 aa).

The protein belongs to the purine/pyrimidine phosphoribosyltransferase family. GfcR subfamily.

The chain is Transcriptional regulator GfcR from Methanoculleus marisnigri (strain ATCC 35101 / DSM 1498 / JR1).